The sequence spans 730 residues: Dual function macrocyclase-peptidase POPB (730 aa).

Residues 1 to 34 (MSSVTWAPGNYPSTRRSDHVDTYQSASKGEVPVP) are disordered. Catalysis depends on charge relay system residues Ser-577, Asp-661, and His-698.

The protein belongs to the peptidase S9A family. In terms of assembly, monomer.

The catalysed reaction is Hydrolysis of Pro-|-Xaa &gt;&gt; Ala-|-Xaa in oligopeptides.. In terms of biological role, dual function macrocyclase-peptidase involved in the biosynthesis of the highly toxic amanitin toxin family of macrocycles. Cleaves peptide bonds on the C-terminal side of prolyl residues. The enzyme first removes 10 residues from the N-terminus of a 35-residue substrate. Conformational trapping of the 25 amino-acid peptide forces the enzyme to release this intermediate rather than proceed to macrocyclization. The enzyme rebinds the 25 amino-acid peptide in a different conformation and catalyzes macrocyclization of the N-terminal eight residues. This is Dual function macrocyclase-peptidase POPB from Galerina marginata (strain CBS 339.88).